A 562-amino-acid chain; its full sequence is Transmembrane E3 ubiquitin-protein ligase FLY1 (562 aa).

An N-terminal signal peptide occupies residues Met1–Gly32. Topologically, residues Leu33–Asn262 are lumenal. The helical transmembrane segment at Lys263–Ile283 threads the bilayer. The Cytoplasmic segment spans residues Arg284–Lys297. The chain crosses the membrane as a helical span at residues Val298–Leu318. The Lumenal segment spans residues Thr319–Gly321. A helical transmembrane segment spans residues Ile322 to Phe342. At Ser343–Leu373 the chain is on the cytoplasmic side. Residues Ser374–Phe394 form a helical membrane-spanning segment. At His395–Tyr397 the chain is on the lumenal side. Residues Met398 to Val418 form a helical membrane-spanning segment. Residues Arg419–His426 lie on the Cytoplasmic side of the membrane. A helical transmembrane segment spans residues Pro427 to Cys447. Residues Pro448–Lys458 lie on the Lumenal side of the membrane. The helical transmembrane segment at Val459–His479 threads the bilayer. Over Tyr480–Ala562 the chain is Cytoplasmic. Residues Cys512–Arg556 form an RING-type; atypical zinc finger.

As to expression, highly expressed in stems. Expressed in root xylem and seed coat.

Its subcellular location is the endomembrane system. It catalyses the reaction S-ubiquitinyl-[E2 ubiquitin-conjugating enzyme]-L-cysteine + [acceptor protein]-L-lysine = [E2 ubiquitin-conjugating enzyme]-L-cysteine + N(6)-ubiquitinyl-[acceptor protein]-L-lysine.. The protein operates within protein modification; protein ubiquitination. In terms of biological role, E3 ubiquitin-protein ligase that regulates the degree of methylesterification of pectin in seed mucilage. May be involved in the recycling of pectin methylesterase enzymes in the endomembrane system of seed coat epidermal cells. Possesses E3 ubiquitin-protein ligase activity in vitro when associated with the E1 enzyme UBA1 and the E2 enzyme UBC8. May be involved in xylem development. This chain is Transmembrane E3 ubiquitin-protein ligase FLY1, found in Arabidopsis thaliana (Mouse-ear cress).